Here is a 289-residue protein sequence, read N- to C-terminus: Putative transmembrane protein ORF289 (289 aa).

Over 1 to 152 (MAIAKEFLLT…QYTSVVTFRT (152 aa)) the chain is Extracellular. Residues 153 to 173 (LVAPILYFFALFLVPAWSTVL) traverse the membrane as a helical segment. Residues 174 to 234 (KQNPTFPQSQ…NGEVTSTQVN (61 aa)) are Cytoplasmic-facing. A helical transmembrane segment spans residues 235–255 (APIFIGVTTPSGVLVLAYNYY). Topologically, residues 256–289 (SGTISKYVSLTVTTTYGSATVINQFETKTTGGTT) are extracellular.

The protein resides in the host membrane. This Acidianus sp. F28 (AFV-2) protein is Putative transmembrane protein ORF289.